The sequence spans 312 residues: Glyoxylate/hydroxypyruvate reductase A (312 aa).

Residue Arg227 is part of the active site. His275 (proton donor) is an active-site residue.

The protein belongs to the D-isomer specific 2-hydroxyacid dehydrogenase family. GhrA subfamily.

It localises to the cytoplasm. It carries out the reaction glycolate + NADP(+) = glyoxylate + NADPH + H(+). It catalyses the reaction (R)-glycerate + NAD(+) = 3-hydroxypyruvate + NADH + H(+). The catalysed reaction is (R)-glycerate + NADP(+) = 3-hydroxypyruvate + NADPH + H(+). In terms of biological role, catalyzes the NADPH-dependent reduction of glyoxylate and hydroxypyruvate into glycolate and glycerate, respectively. This Salmonella choleraesuis (strain SC-B67) protein is Glyoxylate/hydroxypyruvate reductase A.